The sequence spans 1391 residues: Leucine-rich PPR motif-containing protein, mitochondrial (1391 aa).

The transit peptide at 1–42 (MSALLAGARFLLRPGLRALPAPCVRLSPGQGRYLNNTPGHFA) directs the protein to the mitochondrion. 15 PPR repeats span residues 110-144 (LLRS…GAVF), 145-179 (DVSH…NVQP), 180-214 (NRVT…DLPI), 215-249 (TEAV…GIEP), 250-284 (GPET…EGSL), 389-425 (NLHS…GMPV), 704-738 (AIGT…DSSA), 741-775 (DTSK…DVPL), 779-813 (TTTS…GLAK), 815-850 (TSNL…NCMP), 948-982 (RDDM…NVIP), 1028-1062 (PESS…GTAM), 1063-1093 (SASA…AENH), 1100-1134 (NDAA…DKVP), and 1310-1344 (RETA…SVSP). Residues 1118–1387 (KDALASLKAM…KLKKDKADSY (270 aa)) form an RNA-binding region.

The protein localises to the mitochondrion. Its subcellular location is the nucleus. Its function is as follows. May play a role in RNA metabolism in both nuclei and mitochondria. May bind mature mRNA in the nucleus outer membrane. In mitochondria binds to poly(A) mRNA. May be involved in transcription regulation. Binds single-stranded DNA. In Xenopus tropicalis (Western clawed frog), this protein is Leucine-rich PPR motif-containing protein, mitochondrial (lrpprc).